The chain runs to 504 residues: WD repeat-containing protein 55 homolog (504 aa).

Acidic residues predominate over residues 32–49 (QEVVNESDSEIGEYDLGD). A disordered region spans residues 32 to 135 (QEVVNESDSE…NAFDMDEDDE (104 aa)). Residues 66–76 (DSISSDGSFNP) show a composition bias toward polar residues. The span at 77–95 (NDEDSDTDSDDSMLDEPDE) shows a compositional bias: acidic residues. The segment covering 114–124 (SGSSNRNQDSD) has biased composition (polar residues). 6 WD repeats span residues 158–197 (KLED…NKLL), 202–241 (VHAK…LKKL), 245–283 (AHDD…SIFE), 286–325 (EIED…LYVQ), 328–367 (PYEE…YHCD), and 412–451 (QHNM…DFGD). A disordered region spans residues 484–504 (AKEDNNDNENDDATAGPSNTT).

This sequence belongs to the WD repeat WDR55 family.

The protein is WD repeat-containing protein 55 homolog of Drosophila willistoni (Fruit fly).